Reading from the N-terminus, the 218-residue chain is Thiopurine S-methyltransferase (218 aa).

4 residues coordinate S-adenosyl-L-methionine: Trp10, Leu45, Glu66, and Arg123.

This sequence belongs to the class I-like SAM-binding methyltransferase superfamily. TPMT family.

Its subcellular location is the cytoplasm. It carries out the reaction S-adenosyl-L-methionine + a thiopurine = S-adenosyl-L-homocysteine + a thiopurine S-methylether.. The polypeptide is Thiopurine S-methyltransferase (Xanthomonas campestris pv. campestris (strain 8004)).